We begin with the raw amino-acid sequence, 147 residues long: Protein OPG060 (147 aa).

It belongs to the orthopoxvirus OPG058 family.

This chain is Protein OPG060 (OPG060), found in Bos taurus (Bovine).